The primary structure comprises 320 residues: o-succinylbenzoate synthase (320 aa).

The Proton donor role is filled by lysine 133. Mg(2+) is bound by residues aspartate 161, glutamate 190, and aspartate 213. The active-site Proton acceptor is lysine 235.

It belongs to the mandelate racemase/muconate lactonizing enzyme family. MenC type 1 subfamily. The cofactor is a divalent metal cation.

It catalyses the reaction (1R,6R)-6-hydroxy-2-succinyl-cyclohexa-2,4-diene-1-carboxylate = 2-succinylbenzoate + H2O. It participates in quinol/quinone metabolism; 1,4-dihydroxy-2-naphthoate biosynthesis; 1,4-dihydroxy-2-naphthoate from chorismate: step 4/7. The protein operates within quinol/quinone metabolism; menaquinone biosynthesis. Converts 2-succinyl-6-hydroxy-2,4-cyclohexadiene-1-carboxylate (SHCHC) to 2-succinylbenzoate (OSB). The protein is o-succinylbenzoate synthase of Shigella sonnei (strain Ss046).